A 607-amino-acid chain; its full sequence is Aspartate--tRNA(Asp/Asn) ligase (607 aa).

Glutamate 194 serves as a coordination point for L-aspartate. An aspartate region spans residues 218 to 221 (QLFK). Arginine 240 provides a ligand contact to L-aspartate. ATP-binding positions include 240 to 242 (RDE) and glutamine 249. Position 468 (histidine 468) interacts with L-aspartate. Glutamate 502 is an ATP binding site. Arginine 509 provides a ligand contact to L-aspartate. 554–557 (GLDR) provides a ligand contact to ATP.

It belongs to the class-II aminoacyl-tRNA synthetase family. Type 1 subfamily. In terms of assembly, homodimer.

The protein localises to the cytoplasm. The enzyme catalyses tRNA(Asx) + L-aspartate + ATP = L-aspartyl-tRNA(Asx) + AMP + diphosphate. Functionally, aspartyl-tRNA synthetase with relaxed tRNA specificity since it is able to aspartylate not only its cognate tRNA(Asp) but also tRNA(Asn). Reaction proceeds in two steps: L-aspartate is first activated by ATP to form Asp-AMP and then transferred to the acceptor end of tRNA(Asp/Asn). The protein is Aspartate--tRNA(Asp/Asn) ligase of Desulfotalea psychrophila (strain LSv54 / DSM 12343).